The primary structure comprises 333 residues: L-lactate dehydrogenase B chain (333 aa).

Residues Gly-29–Lys-57 and Arg-99 contribute to the NAD(+) site. Residues Arg-106, Asn-138, and Arg-169 each contribute to the substrate site. Asn-138 provides a ligand contact to NAD(+). His-193 (proton acceptor) is an active-site residue. Substrate is bound at residue Thr-248.

It belongs to the LDH/MDH superfamily. LDH family. As to quaternary structure, homotetramer.

Its subcellular location is the cytoplasm. The enzyme catalyses (S)-lactate + NAD(+) = pyruvate + NADH + H(+). It participates in fermentation; pyruvate fermentation to lactate; (S)-lactate from pyruvate: step 1/1. Its function is as follows. Interconverts simultaneously and stereospecifically pyruvate and lactate with concomitant interconversion of NADH and NAD(+). The polypeptide is L-lactate dehydrogenase B chain (LDHB) (Trachemys scripta elegans (Red-eared slider turtle)).